Reading from the N-terminus, the 456-residue chain is Adenylosuccinate synthetase isozyme 2 (456 aa).

Positions 1 to 24 are disordered; it reads MAFAETYPAASSLPNGDCGRPRAR. Residues 39–45 and 67–69 contribute to the GTP site; these read GDEGKGK and GHT. The Proton acceptor role is filled by Asp40. Positions 40 and 67 each coordinate Mg(2+). A substrate-binding site is contributed by Asp40. IMP-binding positions include 40–43, 65–68, Thr162, Arg176, Asn255, Thr270, and Arg334; these read DEGK and NAGH. The active-site Proton donor is the His68. 330–336 is a substrate binding site; the sequence is VTTGRKR. GTP is bound by residues Arg336, 362 to 364, and 444 to 447; these read KLD and GVGK.

Belongs to the adenylosuccinate synthetase family. Homodimer. Requires Mg(2+) as cofactor.

It localises to the cytoplasm. The protein localises to the mitochondrion. It carries out the reaction IMP + L-aspartate + GTP = N(6)-(1,2-dicarboxyethyl)-AMP + GDP + phosphate + 2 H(+). Its pathway is purine metabolism; AMP biosynthesis via de novo pathway; AMP from IMP: step 1/2. Inhibited competitively by AMP and IMP and non-competitively by fructose 1,6-bisphosphate. Functionally, plays an important role in the de novo pathway and in the salvage pathway of purine nucleotide biosynthesis. Catalyzes the first committed step in the biosynthesis of AMP from IMP. This is Adenylosuccinate synthetase isozyme 2 from Homo sapiens (Human).